The primary structure comprises 319 residues: Beta-ketoacyl-[acyl-carrier-protein] synthase III (319 aa).

Active-site residues include C112 and H246. An ACP-binding region spans residues 247-251 (QANFR). The active site involves N276.

It belongs to the thiolase-like superfamily. FabH family. Homodimer.

It is found in the cytoplasm. The catalysed reaction is malonyl-[ACP] + acetyl-CoA + H(+) = 3-oxobutanoyl-[ACP] + CO2 + CoA. It participates in lipid metabolism; fatty acid biosynthesis. Functionally, catalyzes the condensation reaction of fatty acid synthesis by the addition to an acyl acceptor of two carbons from malonyl-ACP. Catalyzes the first condensation reaction which initiates fatty acid synthesis and may therefore play a role in governing the total rate of fatty acid production. Possesses both acetoacetyl-ACP synthase and acetyl transacylase activities. Its substrate specificity determines the biosynthesis of branched-chain and/or straight-chain of fatty acids. The sequence is that of Beta-ketoacyl-[acyl-carrier-protein] synthase III from Shewanella oneidensis (strain ATCC 700550 / JCM 31522 / CIP 106686 / LMG 19005 / NCIMB 14063 / MR-1).